Reading from the N-terminus, the 552-residue chain is Non-structural protein NS1 (552 aa).

Belongs to the orbivirus non-structural protein NS1 family.

This is Non-structural protein NS1 (Segment-5) from Bluetongue virus 13 (isolate USA) (BTV 13).